A 464-amino-acid polypeptide reads, in one-letter code: Adenosylhomocysteinase (464 aa).

Thr56, Asp131, and Glu190 together coordinate substrate. 191–193 serves as a coordination point for NAD(+); that stretch reads TTT. Lys220 and Asp224 together coordinate substrate. NAD(+) is bound by residues Asn225, 254 to 259, Glu277, Asn312, 333 to 335, and Asn378; these read GFGDVG and IGH.

It belongs to the adenosylhomocysteinase family. Requires NAD(+) as cofactor.

Its subcellular location is the cytoplasm. It catalyses the reaction S-adenosyl-L-homocysteine + H2O = L-homocysteine + adenosine. It participates in amino-acid biosynthesis; L-homocysteine biosynthesis; L-homocysteine from S-adenosyl-L-homocysteine: step 1/1. In terms of biological role, may play a key role in the regulation of the intracellular concentration of adenosylhomocysteine. This Zymomonas mobilis subsp. mobilis (strain ATCC 31821 / ZM4 / CP4) protein is Adenosylhomocysteinase.